Here is a 445-residue protein sequence, read N- to C-terminus: tRNA modification GTPase MnmE (445 aa).

(6S)-5-formyl-5,6,7,8-tetrahydrofolate-binding residues include Arg-20, Glu-79, and Lys-119. The TrmE-type G domain occupies 215 to 371; it reads GLKLAIIGPP…ILKNIENIAE (157 aa). Asn-225 provides a ligand contact to K(+). Residues 225–230, 244–250, and 269–272 each bind GTP; these read NAGKSS, SNIAGTT, and DTAG. Ser-229 lines the Mg(2+) pocket. Positions 244, 246, and 249 each coordinate K(+). Thr-250 contacts Mg(2+). Residue Lys-445 coordinates (6S)-5-formyl-5,6,7,8-tetrahydrofolate.

It belongs to the TRAFAC class TrmE-Era-EngA-EngB-Septin-like GTPase superfamily. TrmE GTPase family. As to quaternary structure, homodimer. Heterotetramer of two MnmE and two MnmG subunits. K(+) serves as cofactor.

It is found in the cytoplasm. Exhibits a very high intrinsic GTPase hydrolysis rate. Involved in the addition of a carboxymethylaminomethyl (cmnm) group at the wobble position (U34) of certain tRNAs, forming tRNA-cmnm(5)s(2)U34. In Rickettsia canadensis (strain McKiel), this protein is tRNA modification GTPase MnmE.